The primary structure comprises 412 residues: MLRWITAGESHGRALVAVLEGMVAGVELTSEDIGRQLARRRLGYGRGARMAFEADQVTMLGGVRHGLTLGGPVAIEVGNTEWPKWETVMSPDPVDPAELQNIARNAPLTRPRPGHADYAGMLKYGFDDARPVLERASARETAARVAVGTLAKAFLKQALGVDVISHVISIGDSDPYEGPVPDAADLAAIDASPVRAFDAQAESSMISEIEAAKKDGDTLGGVVEVVVAGLPVGLGSFISGQDRLDSQLAAAIMGIQAIKGVEIGDGFTTARRRGSAAHDEIYPGPDGILRSTNRAGGLEGGMTNGQPLRVRAAMKPISTVPRALATVDMSTGDEAVAIHQRSDVCAVPAAGVVAEAMVALVVARAALEKFGGDSLSETKTNVAAYLDAVAQREPRQESSDEQPARRAANTAG.

Arg40 and Arg46 together coordinate NADP(+). Residues 135–137, 256–257, Gly300, 315–319, and Arg341 contribute to the FMN site; these read RAS, QA, and KPIST. The segment covering 391 to 404 has biased composition (basic and acidic residues); the sequence is QREPRQESSDEQPA. Residues 391–412 are disordered; it reads QREPRQESSDEQPARRAANTAG.

It belongs to the chorismate synthase family. Homotetramer. It depends on FMNH2 as a cofactor.

The enzyme catalyses 5-O-(1-carboxyvinyl)-3-phosphoshikimate = chorismate + phosphate. The protein operates within metabolic intermediate biosynthesis; chorismate biosynthesis; chorismate from D-erythrose 4-phosphate and phosphoenolpyruvate: step 7/7. Its function is as follows. Catalyzes the anti-1,4-elimination of the C-3 phosphate and the C-6 proR hydrogen from 5-enolpyruvylshikimate-3-phosphate (EPSP) to yield chorismate, which is the branch point compound that serves as the starting substrate for the three terminal pathways of aromatic amino acid biosynthesis. This reaction introduces a second double bond into the aromatic ring system. The sequence is that of Chorismate synthase from Mycobacteroides abscessus (strain ATCC 19977 / DSM 44196 / CCUG 20993 / CIP 104536 / JCM 13569 / NCTC 13031 / TMC 1543 / L948) (Mycobacterium abscessus).